Reading from the N-terminus, the 360-residue chain is Heme A synthase (360 aa).

The next 5 membrane-spanning stretches (helical) occupy residues 13–33 (AVRW…LVGG), 99–119 (LLGR…LWRG), 129–149 (LWLL…MVAS), 160–180 (YRLA…VWTV), and 199–219 (SALL…VAGL). H263 is a binding site for heme. Helical transmembrane passes span 265-282 (MTAY…FDAV), 292-312 (GALW…LTLL), and 315-335 (VPIG…TLAV). Position 323 (H323) interacts with heme.

Belongs to the COX15/CtaA family. Type 2 subfamily. As to quaternary structure, interacts with CtaB. Requires heme b as cofactor.

The protein localises to the cell membrane. The enzyme catalyses Fe(II)-heme o + 2 A + H2O = Fe(II)-heme a + 2 AH2. Its pathway is porphyrin-containing compound metabolism; heme A biosynthesis; heme A from heme O: step 1/1. Functionally, catalyzes the conversion of heme O to heme A by two successive hydroxylations of the methyl group at C8. The first hydroxylation forms heme I, the second hydroxylation results in an unstable dihydroxymethyl group, which spontaneously dehydrates, resulting in the formyl group of heme A. This Bradyrhizobium diazoefficiens (strain JCM 10833 / BCRC 13528 / IAM 13628 / NBRC 14792 / USDA 110) protein is Heme A synthase.